A 242-amino-acid chain; its full sequence is tRNA (guanine-N(1)-)-methyltransferase (242 aa).

Residues glycine 108 and 127–132 (IGDYVL) each bind S-adenosyl-L-methionine.

The protein belongs to the RNA methyltransferase TrmD family. Homodimer.

The protein resides in the cytoplasm. The enzyme catalyses guanosine(37) in tRNA + S-adenosyl-L-methionine = N(1)-methylguanosine(37) in tRNA + S-adenosyl-L-homocysteine + H(+). Its function is as follows. Specifically methylates guanosine-37 in various tRNAs. In Lactobacillus acidophilus (strain ATCC 700396 / NCK56 / N2 / NCFM), this protein is tRNA (guanine-N(1)-)-methyltransferase.